Reading from the N-terminus, the 166-residue chain is Putative membrane protein 164 (166 aa).

Over 1–4 the chain is Intravirion; the sequence is MYHP. A helical transmembrane segment spans residues 5 to 25; sequence VVQVLIGLILVIILILGFYHL. Topologically, residues 26–166 are virion surface; the sequence is KKKSCKTDTD…TIMGIARNIL (141 aa).

Belongs to the asfivirus envelope protein p22 family.

The protein resides in the virion membrane. The protein localises to the host cell membrane. This is Putative membrane protein 164 from Ornithodoros (relapsing fever ticks).